A 101-amino-acid chain; its full sequence is Protein Tat (101 aa).

Residues Met-1–Asn-24 are interaction with human CREBBP. A transactivation region spans residues Met-1 to Gly-48. Zn(2+)-binding residues include Cys-22, Cys-25, and Cys-27. Residues Cys-22–Cys-37 are cysteine-rich. At Lys-28 the chain carries N6-acetyllysine; by host PCAF. Residues Cys-30, His-33, Cys-34, and Cys-37 each contribute to the Zn(2+) site. The core stretch occupies residues Phe-38 to Gly-48. The interval Tyr-47–His-101 is disordered. The span at Gly-48–Arg-57 shows a compositional bias: basic residues. The Nuclear localization signal, RNA-binding (TAR), and protein transduction motif lies at Arg-49–Arg-57. The tract at residues Arg-49–Glu-86 is interaction with the host capping enzyme RNGTT. 2 positions are modified to N6-acetyllysine; by host EP300 and GCN5L2: Lys-50 and Lys-51. Arg-52 and Arg-53 each carry asymmetric dimethylarginine; by host PRMT6. The span at Asp-61–Leu-77 shows a compositional bias: polar residues. Lys-71 participates in a covalent cross-link: Glycyl lysine isopeptide (Lys-Gly) (interchain with G-Cter in ubiquitin). Residues Arg-78 to Asp-80 carry the Cell attachment site motif. The segment covering Glu-86–His-101 has biased composition (basic and acidic residues).

The protein belongs to the lentiviruses Tat family. Interacts with host CCNT1. Associates with the P-TEFb complex composed at least of Tat, P-TEFb (CDK9 and CCNT1), TAR RNA, RNA Pol II. Recruits the HATs CREBBP, TAF1/TFIID, EP300, PCAF and GCN5L2. Interacts with host KAT5/Tip60; this interaction targets the latter to degradation. Interacts with the host deacetylase SIRT1. Interacts with host capping enzyme RNGTT; this interaction stimulates RNGTT. Binds to host KDR, and to the host integrins ITGAV/ITGB3 and ITGA5/ITGB1. Interacts with host KPNB1/importin beta-1 without previous binding to KPNA1/importin alpha-1. Interacts with EIF2AK2. Interacts with host nucleosome assembly protein NAP1L1; this interaction may be required for the transport of Tat within the nucleus, since the two proteins interact at the nuclear rim. Interacts with host C1QBP/SF2P32; this interaction involves lysine-acetylated Tat. Interacts with the host chemokine receptors CCR2, CCR3 and CXCR4. Interacts with host DPP4/CD26; this interaction may trigger an anti-proliferative effect. Interacts with host LDLR. Interacts with the host extracellular matrix metalloproteinase MMP1. Interacts with host PRMT6; this interaction mediates Tat's methylation. Interacts with, and is ubiquitinated by MDM2/Hdm2. Interacts with host PSMC3 and HTATIP2. Interacts with STAB1; this interaction may overcome SATB1-mediated repression of IL2 and IL2RA (interleukin) in T cells by binding to the same domain than HDAC1. Interacts (when acetylated) with human CDK13, thereby increasing HIV-1 mRNA splicing and promoting the production of the doubly spliced HIV-1 protein Nef. Interacts with host TBP; this interaction modulates the activity of transcriptional pre-initiation complex. Interacts with host RELA. Interacts with host PLSCR1; this interaction negatively regulates Tat transactivation activity by altering its subcellular distribution. Asymmetrical arginine methylation by host PRMT6 seems to diminish the transactivation capacity of Tat and affects the interaction with host CCNT1. Post-translationally, acetylation by EP300, CREBBP, GCN5L2/GCN5 and PCAF regulates the transactivation activity of Tat. EP300-mediated acetylation of Lys-50 promotes dissociation of Tat from the TAR RNA through the competitive binding to PCAF's bromodomain. In addition, the non-acetylated Tat's N-terminus can also interact with PCAF. PCAF-mediated acetylation of Lys-28 enhances Tat's binding to CCNT1. Lys-50 is deacetylated by SIRT1. In terms of processing, polyubiquitination by host MDM2 does not target Tat to degradation, but activates its transactivation function and fosters interaction with CCNT1 and TAR RNA. Phosphorylated by EIF2AK2 on serine and threonine residues adjacent to the basic region important for TAR RNA binding and function. Phosphorylation of Tat by EIF2AK2 is dependent on the prior activation of EIF2AK2 by dsRNA.

It localises to the host nucleus. It is found in the host nucleolus. The protein localises to the host cytoplasm. Its subcellular location is the secreted. Functionally, transcriptional activator that increases RNA Pol II processivity, thereby increasing the level of full-length viral transcripts. Recognizes a hairpin structure at the 5'-LTR of the nascent viral mRNAs referred to as the transactivation responsive RNA element (TAR) and recruits the cyclin T1-CDK9 complex (P-TEFb complex) that will in turn hyperphosphorylate the RNA polymerase II to allow efficient elongation. The CDK9 component of P-TEFb and other Tat-activated kinases hyperphosphorylate the C-terminus of RNA Pol II that becomes stabilized and much more processive. Other factors such as HTATSF1/Tat-SF1, SUPT5H/SPT5, and HTATIP2 are also important for Tat's function. Besides its effect on RNA Pol II processivity, Tat induces chromatin remodeling of proviral genes by recruiting the histone acetyltransferases (HATs) CREBBP, EP300 and PCAF to the chromatin. This also contributes to the increase in proviral transcription rate, especially when the provirus integrates in transcriptionally silent region of the host genome. To ensure maximal activation of the LTR, Tat mediates nuclear translocation of NF-kappa-B by interacting with host RELA. Through its interaction with host TBP, Tat may also modulate transcription initiation. Tat can reactivate a latently infected cell by penetrating in it and transactivating its LTR promoter. In the cytoplasm, Tat is thought to act as a translational activator of HIV-1 mRNAs. Its function is as follows. Extracellular circulating Tat can be endocytosed by surrounding uninfected cells via the binding to several surface receptors such as CD26, CXCR4, heparan sulfate proteoglycans (HSPG) or LDLR. Neurons are rarely infected, but they internalize Tat via their LDLR. Through its interaction with nuclear HATs, Tat is potentially able to control the acetylation-dependent cellular gene expression. Modulates the expression of many cellular genes involved in cell survival, proliferation or in coding for cytokines or cytokine receptors. Tat plays a role in T-cell and neurons apoptosis. Tat induced neurotoxicity and apoptosis probably contribute to neuroAIDS. Circulating Tat also acts as a chemokine-like and/or growth factor-like molecule that binds to specific receptors on the surface of the cells, affecting many cellular pathways. In the vascular system, Tat binds to ITGAV/ITGB3 and ITGA5/ITGB1 integrins dimers at the surface of endothelial cells and competes with bFGF for heparin-binding sites, leading to an excess of soluble bFGF. The polypeptide is Protein Tat (Human immunodeficiency virus type 1 group M subtype B (isolate YU-2) (HIV-1)).